A 197-amino-acid polypeptide reads, in one-letter code: Glycerol-3-phosphate acyltransferase (197 aa).

A run of 5 helical transmembrane segments spans residues 6–26 (LFIVLLLLSYLIGSISTAIIV), 58–78 (AITLIGDGLKGAIPVLIAHYL), 82–102 (MLNVTWVILVTFLGHVYPIFF), 116–136 (ALLALSYLTGLSFIITWVFVA), and 157–177 (FYLITNNLASTYVIILICLWI).

It belongs to the PlsY family. In terms of assembly, probably interacts with PlsX.

Its subcellular location is the cell inner membrane. It carries out the reaction an acyl phosphate + sn-glycerol 3-phosphate = a 1-acyl-sn-glycero-3-phosphate + phosphate. It functions in the pathway lipid metabolism; phospholipid metabolism. Catalyzes the transfer of an acyl group from acyl-phosphate (acyl-PO(4)) to glycerol-3-phosphate (G3P) to form lysophosphatidic acid (LPA). This enzyme utilizes acyl-phosphate as fatty acyl donor, but not acyl-CoA or acyl-ACP. In Ruthia magnifica subsp. Calyptogena magnifica, this protein is Glycerol-3-phosphate acyltransferase.